Here is a 353-residue protein sequence, read N- to C-terminus: tRNA-specific 2-thiouridylase MnmA 2 (353 aa).

ATP-binding positions include 9–16 (AMSGGVDS) and Met-35. Cys-98 serves as the catalytic Nucleophile. Cys-98 and Cys-194 are oxidised to a cystine. Gly-122 contributes to the ATP binding site. Residues 144-146 (KDQ) are interaction with tRNA. The active-site Cysteine persulfide intermediate is the Cys-194. Residues 300-301 (RY) form an interaction with tRNA region.

It belongs to the MnmA/TRMU family.

It is found in the cytoplasm. It catalyses the reaction S-sulfanyl-L-cysteinyl-[protein] + uridine(34) in tRNA + AH2 + ATP = 2-thiouridine(34) in tRNA + L-cysteinyl-[protein] + A + AMP + diphosphate + H(+). Functionally, catalyzes the 2-thiolation of uridine at the wobble position (U34) of tRNA, leading to the formation of s(2)U34. This is tRNA-specific 2-thiouridylase MnmA 2 from Clostridium botulinum (strain ATCC 19397 / Type A).